Here is a 264-residue protein sequence, read N- to C-terminus: MEMO1 family protein Mbur_2394 (264 aa).

It belongs to the MEMO1 family.

The polypeptide is MEMO1 family protein Mbur_2394 (Methanococcoides burtonii (strain DSM 6242 / NBRC 107633 / OCM 468 / ACE-M)).